A 236-amino-acid polypeptide reads, in one-letter code: 2,3,4,5-tetrahydropyridine-2,6-dicarboxylate N-acetyltransferase (236 aa).

It belongs to the transferase hexapeptide repeat family. DapH subfamily.

The catalysed reaction is (S)-2,3,4,5-tetrahydrodipicolinate + acetyl-CoA + H2O = L-2-acetamido-6-oxoheptanedioate + CoA. It participates in amino-acid biosynthesis; L-lysine biosynthesis via DAP pathway; LL-2,6-diaminopimelate from (S)-tetrahydrodipicolinate (acetylase route): step 1/3. In terms of biological role, catalyzes the transfer of an acetyl group from acetyl-CoA to tetrahydrodipicolinate. The sequence is that of 2,3,4,5-tetrahydropyridine-2,6-dicarboxylate N-acetyltransferase from Listeria ivanovii.